The chain runs to 379 residues: MATIRKTHPLISIINGAFIDLPAPVNISVWWNFGSLLGLCLITQIVTGLFLAMHFTSDISLAFSSVAHICRDVNYGWFLRNIHANGASLFFICLYLHIARGLYYGSYLYKETWNVGVVLFLLVMMTAFVGYVLPWGQMSFWGATVITNLLSAFPYIGDTLVQWIWGGFSVDNATLTRFFTFHFLFPFVIAGASMIHLLFLHETGSNNPLGLNSNVDKITFHPYFSYKDLLGFIILLAGLMFLTLFSPNLLGDPENFTPANPLVTPPHIKPEWYFLFAYAILRSIPNKLGGVLALLFSILILMIVPITHTSKQRSSTFRPLTQILFWTLVADMFILTWIGGQPVEHPFIIIGQIASIIYFALFLVFAPLAGWVENKMLSW.

A run of 4 helical transmembrane segments spans residues 33-53, 77-98, 113-133, and 178-198; these read FGSLLGLCLITQIVTGLFLAM, WFLRNIHANGASLFFICLYLHI, WNVGVVLFLLVMMTAFVGYVL, and FFTFHFLFPFVIAGASMIHLL. Residues His83 and His97 each contribute to the heme b site. Heme b contacts are provided by His182 and His196. His201 contacts a ubiquinone. 4 helical membrane-spanning segments follow: residues 226 to 246, 288 to 308, 320 to 340, and 347 to 367; these read YKDLLGFIILLAGLMFLTLFS, LGGVLALLFSILILMIVPITH, LTQILFWTLVADMFILTWIGG, and FIIIGQIASIIYFALFLVFAP.

This sequence belongs to the cytochrome b family. In terms of assembly, the cytochrome bc1 complex contains 3 respiratory subunits (MT-CYB, CYC1 and UQCRFS1), 2 core proteins (UQCRC1 and UQCRC2) and probably 6 low-molecular weight proteins. Heme b serves as cofactor.

It is found in the mitochondrion inner membrane. Component of the ubiquinol-cytochrome c reductase complex (complex III or cytochrome b-c1 complex) that is part of the mitochondrial respiratory chain. The b-c1 complex mediates electron transfer from ubiquinol to cytochrome c. Contributes to the generation of a proton gradient across the mitochondrial membrane that is then used for ATP synthesis. The sequence is that of Cytochrome b (mt-cyb) from Amia calva (Bowfin).